The chain runs to 344 residues: Melanocyte-stimulating hormone receptor (344 aa).

The Extracellular portion of the chain corresponds to 1 to 37 (MPMQGAQRKLLGSLNSTPTATSNPGLAANHTGAPCLE). A glycan (N-linked (GlcNAc...) asparagine) is linked at asparagine 29. The chain crosses the membrane as a helical span at residues 38 to 63 (VSIPDGLFLSLGLVSLVENVLVVAAI). Residues 64-72 (AKNRNLHSS) are Cytoplasmic-facing. Residues 73–93 (MYXFICCLALSDLLVSGSNML) form a helical membrane-spanning segment. Residues 94–118 (ETAIILLLEAGTLATRASVVQQLHN) are Extracellular-facing. A helical transmembrane segment spans residues 119–140 (TIDVLTCSSMLCSLCFLGAIAV). Over 141–163 (DRYISIFYALRYHSIMTLPRAQR) the chain is Cytoplasmic. The helical transmembrane segment at 164-183 (AIAAIWVASVLSSTLFITYY) threads the bilayer. Over 184 to 191 (DHAAVLLC) the chain is Extracellular. A helical membrane pass occupies residues 192–211 (LVVFFLAMLVLMAVLYVHML). Over 212-240 (ARACQHAQGIIRLHNRQLPAHKGFGLRGA) the chain is Cytoplasmic. A helical transmembrane segment spans residues 241–266 (ATLTILLGIFFLCWGPFFLHLTLVVF). Topologically, residues 267-279 (CPQHLTCNCIFKN) are extracellular. The chain crosses the membrane as a helical span at residues 280–300 (FKVFLTLIICNTIIDPLIYAF). The Cytoplasmic segment spans residues 301-344 (RSQELRRTLKEVLLCSSWPGCWAEGGGDSVWPGSCVTLRGPLPP). Cysteine 315 carries S-palmitoyl cysteine lipidation.

Belongs to the G-protein coupled receptor 1 family. In terms of assembly, interacts with MGRN1, but does not undergo MGRN1-mediated ubiquitination; this interaction competes with GNAS-binding and thus inhibits agonist-induced cAMP production. Interacts with OPN3; the interaction results in a decrease in MC1R-mediated cAMP signaling and ultimately a decrease in melanin production in melanocytes.

It is found in the cell membrane. In terms of biological role, receptor for MSH (alpha, beta and gamma) and ACTH. The activity of this receptor is mediated by G proteins which activate adenylate cyclase. Mediates melanogenesis, the production of eumelanin (black/brown) and phaeomelanin (red/yellow), via regulation of cAMP signaling in melanocytes. This Callithrix geoffroyi (Geoffroy's marmoset) protein is Melanocyte-stimulating hormone receptor (MC1R).